Reading from the N-terminus, the 860-residue chain is Leucine--tRNA ligase (860 aa).

A 'HIGH' region motif is present at residues 42-52 (PYPSGRLHMGH). The 'KMSKS' region signature appears at 619 to 623 (KMSKS). K622 lines the ATP pocket.

The protein belongs to the class-I aminoacyl-tRNA synthetase family.

It is found in the cytoplasm. The catalysed reaction is tRNA(Leu) + L-leucine + ATP = L-leucyl-tRNA(Leu) + AMP + diphosphate. This chain is Leucine--tRNA ligase, found in Escherichia coli O17:K52:H18 (strain UMN026 / ExPEC).